The following is a 156-amino-acid chain: ATP synthase subunit b (156 aa).

A helical membrane pass occupies residues 7–27 (LIGQTVAFIIFVWFCMKFVWP).

This sequence belongs to the ATPase B chain family. In terms of assembly, F-type ATPases have 2 components, F(1) - the catalytic core - and F(0) - the membrane proton channel. F(1) has five subunits: alpha(3), beta(3), gamma(1), delta(1), epsilon(1). F(0) has three main subunits: a(1), b(2) and c(10-14). The alpha and beta chains form an alternating ring which encloses part of the gamma chain. F(1) is attached to F(0) by a central stalk formed by the gamma and epsilon chains, while a peripheral stalk is formed by the delta and b chains.

It is found in the cell inner membrane. In terms of biological role, f(1)F(0) ATP synthase produces ATP from ADP in the presence of a proton or sodium gradient. F-type ATPases consist of two structural domains, F(1) containing the extramembraneous catalytic core and F(0) containing the membrane proton channel, linked together by a central stalk and a peripheral stalk. During catalysis, ATP synthesis in the catalytic domain of F(1) is coupled via a rotary mechanism of the central stalk subunits to proton translocation. Component of the F(0) channel, it forms part of the peripheral stalk, linking F(1) to F(0). The protein is ATP synthase subunit b of Shewanella sp. (strain ANA-3).